A 264-amino-acid polypeptide reads, in one-letter code: Diphthine synthase (264 aa).

S-adenosyl-L-methionine contacts are provided by residues Leu-10, Asp-87, Val-90, 115–116 (SI), Leu-166, Ala-209, and His-234.

Belongs to the diphthine synthase family. In terms of assembly, homodimer.

It carries out the reaction 2-[(3S)-amino-3-carboxypropyl]-L-histidyl-[translation elongation factor 2] + 3 S-adenosyl-L-methionine = diphthine-[translation elongation factor 2] + 3 S-adenosyl-L-homocysteine + 3 H(+). It participates in protein modification; peptidyl-diphthamide biosynthesis. S-adenosyl-L-methionine-dependent methyltransferase that catalyzes the trimethylation of the amino group of the modified target histidine residue in translation elongation factor 2 (EF-2), to form an intermediate called diphthine. The three successive methylation reactions represent the second step of diphthamide biosynthesis. This is Diphthine synthase from Thermococcus gammatolerans (strain DSM 15229 / JCM 11827 / EJ3).